Here is a 385-residue protein sequence, read N- to C-terminus: Isocitrate dehydrogenase [NAD] subunit beta, mitochondrial (385 aa).

Residues 1-34 constitute a mitochondrion transit peptide; sequence MAALSGVRWLTRALVSAGNPGAWRGLSTSAAAHA. Residue K199 is modified to N6-acetyllysine.

It belongs to the isocitrate and isopropylmalate dehydrogenases family. As to quaternary structure, heterooligomer of subunits alpha (IDH3A), beta (IDH3B), and gamma (IDH3G) in the apparent ratio of 2:1:1. The heterodimer containing one IDH3A and one IDH3B subunit and the heterodimer containing one IDH3A and one IDH3G subunit assemble into a heterotetramer (which contains two subunits of IDH3A, one of IDH3B and one of IDH3G) and further into the heterooctamer.

The protein localises to the mitochondrion. The heterotetramer and the heterodimer composed of IDH3A and IDH3G subunits can be allosterically activated by citrate (CIT) or/and ADP, and the two activators can act independently or synergistically. The heterodimer composed of IDH3A and IDH3B subunits cannot be allosterically regulated and the allosteric regulation of the heterotetramer is through the IDH3G subunit and not the IDH3B subunit. The IDH3G subunit contains the allosteric site which consists of a CIT-binding site and an ADP-binding site, and the binding of CIT and ADP causes conformational changes at the allosteric site which are transmitted to the active site in the catalytic subunit (IDH3A) through a cascade of conformational changes at the heterodimer interface, leading to stabilization of the isocitrate-binding at the active site and thus activation of the enzyme. ATP can activate the heterotetramer and the heterodimer composed of IDH3A and IDH3G subunits at low concentrations but inhibits their activities at high concentrations, whereas ATP exhibits only inhibitory effect on the heterodimer composed of IDH3A and IDH3B subunits. In terms of biological role, plays a structural role to facilitate the assembly and ensure the full activity of the enzyme catalyzing the decarboxylation of isocitrate (ICT) into alpha-ketoglutarate. The heterodimer composed of the alpha (IDH3A) and beta (IDH3B) subunits and the heterodimer composed of the alpha (IDH3A) and gamma (IDH3G) subunits, have considerable basal activity but the full activity of the heterotetramer (containing two subunits of IDH3A, one of IDH3B and one of IDH3G) requires the assembly and cooperative function of both heterodimers. In Macaca fascicularis (Crab-eating macaque), this protein is Isocitrate dehydrogenase [NAD] subunit beta, mitochondrial (IDH3B).